A 201-amino-acid polypeptide reads, in one-letter code: NADH-quinone oxidoreductase subunit C (201 aa).

The protein belongs to the complex I 30 kDa subunit family. In terms of assembly, NDH-1 is composed of 14 different subunits. Subunits NuoB, C, D, E, F, and G constitute the peripheral sector of the complex.

The protein resides in the cell inner membrane. It catalyses the reaction a quinone + NADH + 5 H(+)(in) = a quinol + NAD(+) + 4 H(+)(out). NDH-1 shuttles electrons from NADH, via FMN and iron-sulfur (Fe-S) centers, to quinones in the respiratory chain. The immediate electron acceptor for the enzyme in this species is believed to be ubiquinone. Couples the redox reaction to proton translocation (for every two electrons transferred, four hydrogen ions are translocated across the cytoplasmic membrane), and thus conserves the redox energy in a proton gradient. The sequence is that of NADH-quinone oxidoreductase subunit C from Mesorhizobium japonicum (strain LMG 29417 / CECT 9101 / MAFF 303099) (Mesorhizobium loti (strain MAFF 303099)).